A 427-amino-acid polypeptide reads, in one-letter code: Serine--tRNA ligase (427 aa).

233 to 235 (TAE) provides a ligand contact to L-serine. 264-266 (RSE) is an ATP binding site. Residue E287 participates in L-serine binding. Residue 351-354 (EISS) coordinates ATP. S387 is a binding site for L-serine.

This sequence belongs to the class-II aminoacyl-tRNA synthetase family. Type-1 seryl-tRNA synthetase subfamily. In terms of assembly, homodimer. The tRNA molecule binds across the dimer.

The protein localises to the cytoplasm. It catalyses the reaction tRNA(Ser) + L-serine + ATP = L-seryl-tRNA(Ser) + AMP + diphosphate + H(+). The catalysed reaction is tRNA(Sec) + L-serine + ATP = L-seryl-tRNA(Sec) + AMP + diphosphate + H(+). Its pathway is aminoacyl-tRNA biosynthesis; selenocysteinyl-tRNA(Sec) biosynthesis; L-seryl-tRNA(Sec) from L-serine and tRNA(Sec): step 1/1. Catalyzes the attachment of serine to tRNA(Ser). Is also able to aminoacylate tRNA(Sec) with serine, to form the misacylated tRNA L-seryl-tRNA(Sec), which will be further converted into selenocysteinyl-tRNA(Sec). The protein is Serine--tRNA ligase of Buchnera aphidicola subsp. Schizaphis graminum (strain Sg).